Consider the following 897-residue polypeptide: Probable bifunctional chitinase/lysozyme (897 aa).

The signal sequence occupies residues 1-24 (MKLNIFTKSMIGMGLVCSALPALA). Positions 25-91 (MEAWNNQQGG…SQFGNTLSCE (67 aa)) constitute a Chitin-binding type-3 1 domain. 3 disordered regions span residues 90–127 (CEKS…SNSS), 182–222 (TEIS…PADK), and 287–333 (QYGN…DSVN). Residues 95–111 (SSSSSNSNTPASNTPAN) are compositionally biased toward low complexity. 2 stretches are compositionally biased toward polar residues: residues 113-127 (GSAT…SNSS) and 182-197 (TEIS…TSAP). The 67-residue stretch at 128 to 194 (VVAWNKQQGG…SETSNPQSCT (67 aa)) folds into the Chitin-binding type-3 2 domain. Residues 198-216 (QPSPDVKPAPDVKPAPDVQ) show a composition bias toward pro residues. The Chitin-binding type-3 3 domain occupies 229-295 (VVAWKGQEGS…SQYGNPGSCS (67 aa)). A compositionally biased stretch (pro residues) spans 309-318 (DPTPETPVTP). Positions 322–333 (NSEPSTPADSVN) are enriched in polar residues. 2 consecutive Chitin-binding type-3 domains span residues 337-403 (LQAW…TTCE) and 459-529 (AKAW…PQFN). The 292-residue stretch at 586–877 (KHVYAPYVDF…TNLSPEFHGL (292 aa)) folds into the GH18 domain. An intrachain disulfide couples Cys-628 to Cys-673. Glu-700 functions as the Proton donor in the catalytic mechanism.

It belongs to the glycosyl hydrolase 18 family. Chitinase class II subfamily.

It localises to the periplasm. The catalysed reaction is Random endo-hydrolysis of N-acetyl-beta-D-glucosaminide (1-&gt;4)-beta-linkages in chitin and chitodextrins.. It catalyses the reaction Hydrolysis of (1-&gt;4)-beta-linkages between N-acetylmuramic acid and N-acetyl-D-glucosamine residues in a peptidoglycan and between N-acetyl-D-glucosamine residues in chitodextrins.. Bifunctional enzyme with lysozyme/chitinase activity. This Escherichia coli (strain K12) protein is Probable bifunctional chitinase/lysozyme (chiA).